The primary structure comprises 167 residues: Small ribosomal subunit protein uS5 (167 aa).

In terms of domain architecture, S5 DRBM spans 11–74 (LQEKLIAVNR…EKARRNMINV (64 aa)).

Belongs to the universal ribosomal protein uS5 family. As to quaternary structure, part of the 30S ribosomal subunit. Contacts proteins S4 and S8.

In terms of biological role, with S4 and S12 plays an important role in translational accuracy. Its function is as follows. Located at the back of the 30S subunit body where it stabilizes the conformation of the head with respect to the body. The protein is Small ribosomal subunit protein uS5 of Escherichia coli O139:H28 (strain E24377A / ETEC).